The chain runs to 446 residues: Sphingomyelinase phosphodiesterase C (446 aa).

The first 26 residues, 1-26, serve as a signal peptide directing secretion; that stretch reads MKFRNNLTLYLIFIIVFTIYISLTIS. Residue N6 is glycosylated (N-linked (GlcNAc...) asparagine). Positions 39 and 41 each coordinate Zn(2+). C56 and C78 are joined by a disulfide. D107 provides a ligand contact to Zn(2+). N-linked (GlcNAc...) asparagine glycans are attached at residues N118 and N128. N148 contributes to the Zn(2+) binding site. Residues N178, N217, N229, and N234 are each glycosylated (N-linked (GlcNAc...) asparagine). 3 residues coordinate Zn(2+): H247, H287, and H289. N-linked (GlcNAc...) asparagine glycosylation is found at N342 and N357. A disulfide bridge connects residues C429 and C442.

This sequence belongs to the acid sphingomyelinase family. The cofactor is Zn(2+).

It localises to the secreted. The sequence is that of Sphingomyelinase phosphodiesterase C (sgmC) from Dictyostelium discoideum (Social amoeba).